A 506-amino-acid chain; its full sequence is ATP synthase subunit alpha (506 aa).

ATP is bound at residue 170-177 (GDRQTGKT).

The protein belongs to the ATPase alpha/beta chains family. As to quaternary structure, F-type ATPases have 2 components, CF(1) - the catalytic core - and CF(0) - the membrane proton channel. CF(1) has five subunits: alpha(3), beta(3), gamma(1), delta(1), epsilon(1). CF(0) has four main subunits: a(1), b(1), b'(1) and c(9-12).

It is found in the cellular thylakoid membrane. It catalyses the reaction ATP + H2O + 4 H(+)(in) = ADP + phosphate + 5 H(+)(out). Functionally, produces ATP from ADP in the presence of a proton gradient across the membrane. The alpha chain is a regulatory subunit. This is ATP synthase subunit alpha from Synechococcus sp. (strain CC9605).